The sequence spans 391 residues: NAD(P)H-quinone oxidoreductase subunit H, chloroplastic (391 aa).

The protein belongs to the complex I 49 kDa subunit family. In terms of assembly, NDH is composed of at least 16 different subunits, 5 of which are encoded in the nucleus.

Its subcellular location is the plastid. The protein resides in the chloroplast thylakoid membrane. The catalysed reaction is a plastoquinone + NADH + (n+1) H(+)(in) = a plastoquinol + NAD(+) + n H(+)(out). It carries out the reaction a plastoquinone + NADPH + (n+1) H(+)(in) = a plastoquinol + NADP(+) + n H(+)(out). Functionally, NDH shuttles electrons from NAD(P)H:plastoquinone, via FMN and iron-sulfur (Fe-S) centers, to quinones in the photosynthetic chain and possibly in a chloroplast respiratory chain. The immediate electron acceptor for the enzyme in this species is believed to be plastoquinone. Couples the redox reaction to proton translocation, and thus conserves the redox energy in a proton gradient. The sequence is that of NAD(P)H-quinone oxidoreductase subunit H, chloroplastic from Mesostigma viride (Green alga).